Here is a 635-residue protein sequence, read N- to C-terminus: Threonine--tRNA ligase (635 aa).

The TGS domain maps to 1–61 (MVSIRLPDGS…DHDASLAIVT (61 aa)). The tract at residues 242 to 533 (DHRKLGKQLD…LIEHHAGAMP (292 aa)) is catalytic. Residues Cys-333, His-384, and His-510 each contribute to the Zn(2+) site.

This sequence belongs to the class-II aminoacyl-tRNA synthetase family. As to quaternary structure, homodimer. It depends on Zn(2+) as a cofactor.

Its subcellular location is the cytoplasm. The catalysed reaction is tRNA(Thr) + L-threonine + ATP = L-threonyl-tRNA(Thr) + AMP + diphosphate + H(+). Its function is as follows. Catalyzes the attachment of threonine to tRNA(Thr) in a two-step reaction: L-threonine is first activated by ATP to form Thr-AMP and then transferred to the acceptor end of tRNA(Thr). Also edits incorrectly charged L-seryl-tRNA(Thr). The protein is Threonine--tRNA ligase of Burkholderia multivorans (strain ATCC 17616 / 249).